The sequence spans 138 residues: Probable histone H2AXb (138 aa).

A compositionally biased stretch (gly residues) spans 1–10 (MSSAGGGGGR). Residues 1-24 (MSSAGGGGGRGKSKGSKSVSRSSK) are disordered. Ser135 carries the post-translational modification Phosphoserine; by ATM and ATR. The [ST]-Q motif motif lies at 135-136 (SQ).

The protein belongs to the histone H2A family. The nucleosome is a histone octamer containing two molecules each of H2A, H2B, H3 and H4 assembled in one H3-H4 heterotetramer and two H2A-H2B heterodimers. The octamer wraps approximately 147 bp of DNA. Interacts with numerous proteins required for DNA damage signaling and repair when phosphorylated on Ser-135. Post-translationally, phosphorylated to form H2AXS139ph (gamma-H2AX) in response to DNA double strand breaks (DSBs) generated by exogenous genotoxic agents and by stalled replication forks, and may also occur during meiotic recombination events. Phosphorylation can extend up to several thousand nucleosomes from the actual site of the DSB and may mark the surrounding chromatin for recruitment of proteins required for DNA damage signaling and repair. Widespread phosphorylation may also serve to amplify the damage signal or aid repair of persistent lesions. H2AXS139ph in response to ionizing radiation is mediated by ATM while defects in DNA replication induce H2AXS139ph subsequent to activation of ATR. Dephosphorylation of H2AXS139ph by PP2A is required for DNA DSB repair.

The protein resides in the nucleus. The protein localises to the chromosome. Functionally, variant histone H2A which replaces conventional H2A in a subset of nucleosomes. Nucleosomes wrap and compact DNA into chromatin, limiting DNA accessibility to the cellular machineries which require DNA as a template. Histones thereby play a central role in transcription regulation, DNA repair, DNA replication and chromosomal stability. DNA accessibility is regulated via a complex set of post-translational modifications of histones, also called histone code, and nucleosome remodeling. Required for checkpoint-mediated arrest of cell cycle progression in response to low doses of ionizing radiation and for efficient repair of DNA double strand breaks (DSBs) specifically when modified by C-terminal phosphorylation. The sequence is that of Probable histone H2AXb from Oryza sativa subsp. indica (Rice).